Consider the following 354-residue polypeptide: Protein Wnt-9a (354 aa).

A signal peptide spans 1–15 (MALLRALLGLLACTP). 5 disulfides stabilise this stretch: Cys-85-Cys-96, Cys-133-Cys-141, Cys-143-Cys-160, Cys-207-Cys-221, and Cys-209-Cys-216. Asn-95 is a glycosylation site (N-linked (GlcNAc...) asparagine). A lipid anchor (O-palmitoleoyl serine; by PORCN) is attached at Ser-213. A disordered region spans residues 246-271 (GSTTNEATGEGDISPPKKSIPGHSDQ). Cystine bridges form between Cys-288/Cys-313, Cys-302/Cys-308, Cys-312/Cys-352, Cys-328/Cys-343, Cys-330/Cys-340, and Cys-335/Cys-336.

Belongs to the Wnt family. In terms of processing, palmitoleoylation is required for efficient binding to frizzled receptors. Depalmitoleoylation leads to Wnt signaling pathway inhibition.

The protein resides in the secreted. It is found in the extracellular space. It localises to the extracellular matrix. Its function is as follows. Ligand for members of the frizzled family of seven transmembrane receptors. Functions in the canonical Wnt/beta-catenin signaling pathway. Plays a role in embryonic chondrocyte maturation and in embryonic bone mineralization. The chain is Protein Wnt-9a (WNT9A) from Gallus gallus (Chicken).